The sequence spans 248 residues: Floral homeotic protein AGAMOUS (248 aa).

The MADS-box domain occupies 19 to 73 (RGKIEIKRIENTTNRQVTFCKRRNGLLKKAYELSVLCDAEVALIVFSSRGRLYEY). Positions 103 to 193 (AQYYQQEASK…RAKIAETERA (91 aa)) constitute a K-box domain. Residues 196–219 (QQQQQQMNLMPGSSSYELVPPPHQ) are disordered. Residues 202-211 (MNLMPGSSSY) are compositionally biased toward polar residues.

The protein localises to the nucleus. Functionally, probable transcription factor involved in regulating genes that determines stamen and carpel development in wild-type flowers. This is Floral homeotic protein AGAMOUS (AG1) from Nicotiana tabacum (Common tobacco).